The following is a 579-amino-acid chain: Arginine--tRNA ligase (579 aa).

Positions 127–137 (PNLAKEMHVGH) match the 'HIGH' region motif.

It belongs to the class-I aminoacyl-tRNA synthetase family. Monomer.

Its subcellular location is the cytoplasm. It catalyses the reaction tRNA(Arg) + L-arginine + ATP = L-arginyl-tRNA(Arg) + AMP + diphosphate. The protein is Arginine--tRNA ligase of Ectopseudomonas mendocina (strain ymp) (Pseudomonas mendocina).